Here is a 512-residue protein sequence, read N- to C-terminus: Envelope glycoprotein (512 aa).

The first 15 residues, 1 to 15, serve as a signal peptide directing secretion; it reads MFLQTALLLLSLGVA. N-linked (GlcNAc...) asparagine; by host glycans are attached at residues asparagine 185, asparagine 263, asparagine 289, asparagine 378, and asparagine 416. Residues 479-502 form a helical membrane-spanning segment; the sequence is GQLGGLLYGNIGVYLLIAFAFVLL.

The protein localises to the virion membrane. In terms of biological role, attaches the virus to host cellular receptor and later induces fusion of virion with host membrane. The sequence is that of Envelope glycoprotein from Thogoto virus (isolate SiAr 126) (Tho).